A 414-amino-acid polypeptide reads, in one-letter code: Glucose-6-phosphate isomerase (414 aa).

Glutamate 266 functions as the Proton donor in the catalytic mechanism. Active-site residues include histidine 292 and lysine 405.

Belongs to the GPI family.

The protein resides in the cytoplasm. It carries out the reaction alpha-D-glucose 6-phosphate = beta-D-fructose 6-phosphate. It functions in the pathway carbohydrate biosynthesis; gluconeogenesis. Its pathway is carbohydrate degradation; glycolysis; D-glyceraldehyde 3-phosphate and glycerone phosphate from D-glucose: step 2/4. In terms of biological role, catalyzes the reversible isomerization of glucose-6-phosphate to fructose-6-phosphate. This is Glucose-6-phosphate isomerase from Thermus thermophilus (strain ATCC BAA-163 / DSM 7039 / HB27).